We begin with the raw amino-acid sequence, 251 residues long: Hydroxyacylglutathione hydrolase (251 aa).

Zn(2+) contacts are provided by histidine 53, histidine 55, aspartate 57, histidine 58, histidine 110, aspartate 127, and histidine 165.

It belongs to the metallo-beta-lactamase superfamily. Glyoxalase II family. As to quaternary structure, monomer. The cofactor is Zn(2+).

It catalyses the reaction an S-(2-hydroxyacyl)glutathione + H2O = a 2-hydroxy carboxylate + glutathione + H(+). It functions in the pathway secondary metabolite metabolism; methylglyoxal degradation; (R)-lactate from methylglyoxal: step 2/2. Functionally, thiolesterase that catalyzes the hydrolysis of S-D-lactoyl-glutathione to form glutathione and D-lactic acid. This is Hydroxyacylglutathione hydrolase from Escherichia coli (strain SMS-3-5 / SECEC).